The primary structure comprises 376 residues: Chaperone protein DnaJ (376 aa).

A J domain is found at 5–70; it reads DYYEVLGVGR…DKKAAYDQFG (66 aa). Residues 132–210 form a CR-type zinc finger; sequence GLTKELRIPT…CHGEGRVEKS (79 aa). Positions 145, 148, 162, 165, 184, 187, 198, and 201 each coordinate Zn(2+). 4 CXXCXGXG motif repeats span residues 145 to 152, 162 to 169, 184 to 191, and 198 to 205; these read CDLCDGSG, CGTCHGQG, CPTCHGRG, and CGKCHGEG.

Belongs to the DnaJ family. Homodimer. Zn(2+) is required as a cofactor.

It is found in the cytoplasm. Participates actively in the response to hyperosmotic and heat shock by preventing the aggregation of stress-denatured proteins and by disaggregating proteins, also in an autonomous, DnaK-independent fashion. Unfolded proteins bind initially to DnaJ; upon interaction with the DnaJ-bound protein, DnaK hydrolyzes its bound ATP, resulting in the formation of a stable complex. GrpE releases ADP from DnaK; ATP binding to DnaK triggers the release of the substrate protein, thus completing the reaction cycle. Several rounds of ATP-dependent interactions between DnaJ, DnaK and GrpE are required for fully efficient folding. Also involved, together with DnaK and GrpE, in the DNA replication of plasmids through activation of initiation proteins. The chain is Chaperone protein DnaJ from Shewanella frigidimarina (strain NCIMB 400).